The primary structure comprises 317 residues: Phospholipase A1 1 (317 aa).

The first 7 residues, 1 to 7, serve as a signal peptide directing secretion; the sequence is RLIMFVG. The propeptide occupies 8 to 17; sequence DPSSSNELDR. C21 and C104 form a disulfide bridge. A glycan (N-linked (GlcNAc...) asparagine) is linked at N25. The active-site Nucleophile is the S154. Catalysis depends on D182, which acts as the Charge relay system. Cysteines 193 and 198 form a disulfide. N229 carries an N-linked (GlcNAc...) asparagine glycan. C236 and C244 form a disulfide bridge. H246 (charge relay system) is an active-site residue. 3 cysteine pairs are disulfide-bonded: C261–C285, C262–C310, and C278–C283.

This sequence belongs to the AB hydrolase superfamily. Lipase family. As to expression, expressed by the venom gland.

It localises to the secreted. It carries out the reaction a 1,2-diacyl-sn-glycero-3-phosphocholine + H2O = a 2-acyl-sn-glycero-3-phosphocholine + a fatty acid + H(+). In terms of biological role, catalyzes the hydrolysis of phosphatidylcholine with phospholipase A1 activity. May act as an allergen and induce hemolytic activity. The polypeptide is Phospholipase A1 1 (Dolichovespula maculata (Bald-faced hornet)).